The primary structure comprises 96 residues: Probable Fe(2+)-trafficking protein (96 aa).

The interval 21 to 40 (LPKMPHPPFPNKKGQELQET) is disordered.

The protein belongs to the Fe(2+)-trafficking protein family.

Functionally, could be a mediator in iron transactions between iron acquisition and iron-requiring processes, such as synthesis and/or repair of Fe-S clusters in biosynthetic enzymes. In Psychrobacter arcticus (strain DSM 17307 / VKM B-2377 / 273-4), this protein is Probable Fe(2+)-trafficking protein.